The primary structure comprises 682 residues: Potassium-transporting ATPase ATP-binding subunit (682 aa).

The next 4 membrane-spanning stretches (helical) occupy residues 34–54 (PVMF…LAMV), 58–78 (IAGS…TVLF), 219–239 (IALT…TATL), and 254–274 (VLVA…LSAI). Asp307 functions as the 4-aspartylphosphate intermediate in the catalytic mechanism. Residues Asp344, Glu348, 377-384 (FTAQSRMS), and Lys395 each bind ATP. Positions 518 and 522 each coordinate Mg(2+). A run of 3 helical transmembrane segments spans residues 588–608 (FAII…LNVM), 616–636 (AILS…PLAL), and 662–682 (LVVP…LGLA).

It belongs to the cation transport ATPase (P-type) (TC 3.A.3) family. Type IA subfamily. As to quaternary structure, the system is composed of three essential subunits: KdpA, KdpB and KdpC.

It is found in the cell inner membrane. It carries out the reaction K(+)(out) + ATP + H2O = K(+)(in) + ADP + phosphate + H(+). Its function is as follows. Part of the high-affinity ATP-driven potassium transport (or Kdp) system, which catalyzes the hydrolysis of ATP coupled with the electrogenic transport of potassium into the cytoplasm. This subunit is responsible for energy coupling to the transport system and for the release of the potassium ions to the cytoplasm. This Salmonella choleraesuis (strain SC-B67) protein is Potassium-transporting ATPase ATP-binding subunit.